We begin with the raw amino-acid sequence, 162 residues long: E3 ubiquitin-protein ligase LAP (162 aa).

Topologically, residues 1 to 78 are cytoplasmic; sequence MEGSDNTNTH…RWKCSFMYCN (78 aa). The RING-CH-type zinc-finger motif lies at 3–61; it reads GSDNTNTHCWICKDEYNVSTNFCNCKNEFKIVHKNCLEEWINFSHNTKCKICNGKYNIK. Residues cysteine 11, cysteine 14, cysteine 25, cysteine 27, histidine 35, cysteine 38, cysteine 51, and cysteine 54 each contribute to the Zn(2+) site. A helical transmembrane segment spans residues 79–99; the sequence is VPAICVSLICLLLLPLTILLV. The Lumenal segment spans residues 100 to 121; it reads KFNLKSMLENIENRDLIALISA. The helical transmembrane segment at 122 to 142 threads the bilayer; the sequence is MAYSLPCVVGFITVVHILIAL. Topologically, residues 143–162 are cytoplasmic; the sequence is YDYYLAAKSDNTTYQVYEYI.

This sequence belongs to the poxviridae LAP protein family.

It localises to the host membrane. The protein resides in the host Golgi apparatus. It is found in the host trans-Golgi network membrane. Its subcellular location is the host early endosome membrane. It carries out the reaction S-ubiquitinyl-[E2 ubiquitin-conjugating enzyme]-L-cysteine + [acceptor protein]-L-lysine = [E2 ubiquitin-conjugating enzyme]-L-cysteine + N(6)-ubiquitinyl-[acceptor protein]-L-lysine.. In terms of biological role, E3 ubiquitin-protein ligase which promotes ubiquitination and subsequent degradation of host MHC-I and CD4 molecules, presumably to prevent lysis of infected cells by cytotoxic T-lymphocytes and NK cell. Binds target molecules through transmembrane interaction. The result of this ubiquitination is the enhancement of the endocytosis of the target chain and the delivery to the lysosome, where it is proteolytically destroyed. This Lumpy skin disease virus (LSDV) protein is E3 ubiquitin-protein ligase LAP (LW010).